A 47-amino-acid chain; its full sequence is Large ribosomal subunit protein bL34 (47 aa).

This sequence belongs to the bacterial ribosomal protein bL34 family.

This is Large ribosomal subunit protein bL34 from Mycolicibacterium vanbaalenii (strain DSM 7251 / JCM 13017 / BCRC 16820 / KCTC 9966 / NRRL B-24157 / PYR-1) (Mycobacterium vanbaalenii).